The following is a 568-amino-acid chain: Dual specificity tyrosine-phosphorylation-regulated kinase 3 (568 aa).

The tract at residues 1–168 (MKWKEKLGDG…HGVIGGPNNG (168 aa)) is disordered. The segment covering 77-114 (SNTVQSDGISDSEKCSPTVSQGKSSDCLNTVKSNSSSK) has biased composition (polar residues). In terms of domain architecture, Protein kinase spans 189 to 502 (YEVLKIIGKG…PAQALRHPWI (314 aa)). Residues 195-203 (IGKGSFGQV) and K218 contribute to the ATP site. D315 acts as the Proton acceptor in catalysis. Residue S330 is modified to Phosphoserine. Y349 carries the phosphotyrosine modification. Residues 448–461 (RSRRGKKRGPPGSK) carry the Nuclear localization signal motif.

It belongs to the protein kinase superfamily. CMGC Ser/Thr protein kinase family. MNB/DYRK subfamily. As to quaternary structure, interacts with SIRT1. Mg(2+) is required as a cofactor. In terms of processing, protein kinase activity is activated following autophosphorylation at Tyr-349. Autophosphorylation at Ser-330 stabilizes the protein and enhances the protein kinase activity. Ubiquitinated at anaphase by the anaphase-promoting complex (APC/C), leading to its degradation by the proteasome.

The protein resides in the nucleus. It is found in the cytoplasm. It localises to the nucleus speckle. The protein localises to the cytoplasmic granule. Its subcellular location is the cytoskeleton. The protein resides in the microtubule organizing center. It is found in the centrosome. It carries out the reaction L-seryl-[protein] + ATP = O-phospho-L-seryl-[protein] + ADP + H(+). The catalysed reaction is L-threonyl-[protein] + ATP = O-phospho-L-threonyl-[protein] + ADP + H(+). It catalyses the reaction L-tyrosyl-[protein] + ATP = O-phospho-L-tyrosyl-[protein] + ADP + H(+). With respect to regulation, protein kinase activity is activated following autophosphorylation at Tyr-349. Its function is as follows. Dual-specificity protein kinase that promotes disassembly of several types of membraneless organelles during mitosis, such as stress granules, nuclear speckles and pericentriolar material. Dual-specificity tyrosine-regulated kinases (DYRKs) autophosphorylate a critical tyrosine residue in their activation loop and phosphorylate their substrate on serine and threonine residues. Acts as a central dissolvase of membraneless organelles during the G2-to-M transition, after the nuclear-envelope breakdown: acts by mediating phosphorylation of multiple serine and threonine residues in unstructured domains of proteins, such as SRRM1 and PCM1. Does not mediate disassembly of all membraneless organelles: disassembly of P-body and nucleolus is not regulated by DYRK3. Dissolution of membraneless organelles at the onset of mitosis is also required to release mitotic regulators, such as ZNF207, from liquid-unmixed organelles where they are sequestered and keep them dissolved during mitosis. Regulates mTORC1 by mediating the dissolution of stress granules: during stressful conditions, DYRK3 partitions from the cytosol to the stress granule, together with mTORC1 components, which prevents mTORC1 signaling. When stress signals are gone, the kinase activity of DYRK3 is required for the dissolution of stress granule and mTORC1 relocation to the cytosol: acts by mediating the phosphorylation of the mTORC1 inhibitor AKT1S1, allowing full reactivation of mTORC1 signaling. Also acts as a negative regulator of EPO-dependent erythropoiesis: may place an upper limit on red cell production during stress erythropoiesis. Inhibits cell death due to cytokine withdrawal in hematopoietic progenitor cells. Promotes cell survival upon genotoxic stress through phosphorylation of SIRT1: this in turn inhibits p53/TP53 activity and apoptosis. This Macaca fascicularis (Crab-eating macaque) protein is Dual specificity tyrosine-phosphorylation-regulated kinase 3.